We begin with the raw amino-acid sequence, 963 residues long: Iron-responsive element-binding protein 2 (963 aa).

[4Fe-4S] cluster is bound by residues C512, C578, and C581.

The protein belongs to the aconitase/IPM isomerase family. In terms of assembly, interacts with RBCK1 isoform 1 and isoform 2 only in iron-rich conditions. Interacts (when associated with the 4Fe-4S) with FBXL5. Interacts with CIAO1 and CIAO2A. Requires [4Fe-4S] cluster as cofactor. Post-translationally, ubiquitinated and degraded by the proteasome in presence of high level of iron and oxygen. Ubiquitinated by a SCF complex containing FBXL5. Upon iron and oxygen depletion FBXL5 is degraded, preventing ubiquitination and allowing its RNA-binding activity.

It is found in the cytoplasm. Functionally, RNA-binding protein that binds to iron-responsive elements (IRES), which are stem-loop structures found in the 5'-UTR of ferritin, and delta aminolevulinic acid synthase mRNAs, and in the 3'-UTR of transferrin receptor mRNA. Binding to the IRE element in ferritin results in the repression of its mRNA translation. Binding of the protein to the transferrin receptor mRNA inhibits the degradation of this otherwise rapidly degraded mRNA. The protein is Iron-responsive element-binding protein 2 (IREB2) of Homo sapiens (Human).